The chain runs to 870 residues: DNA mismatch repair protein MutS (870 aa).

620 to 627 (GPNMAGKS) serves as a coordination point for ATP.

Belongs to the DNA mismatch repair MutS family.

In terms of biological role, this protein is involved in the repair of mismatches in DNA. It is possible that it carries out the mismatch recognition step. This protein has a weak ATPase activity. The sequence is that of DNA mismatch repair protein MutS from Acetivibrio thermocellus (strain ATCC 27405 / DSM 1237 / JCM 9322 / NBRC 103400 / NCIMB 10682 / NRRL B-4536 / VPI 7372) (Clostridium thermocellum).